A 1311-amino-acid chain; its full sequence is Protein PARALOG OF AIPP2 (1311 aa).

Disordered stretches follow at residues 1 to 21, 114 to 141, and 178 to 280; these read MADR…KVES, ISDD…VSAS, and GNKD…EMVE. Basic and acidic residues predominate over residues 213-240; it reads NHDDRVSSEKGNFKEKSRPGGNKERQEP. A compositionally biased stretch (low complexity) spans 258-270; that stretch reads SKSSSSNSSAVSE. The PHD-type zinc finger occupies 283–334; the sequence is VKVCDICGDAGREDLLAICSGCSDGAEHTYCMREMLDEVPEGDWLCEECAEE. Positions 286, 289, 301, 304, 310, 313, 328, and 331 each coordinate Zn(2+). Residues 328–348 adopt a coiled-coil conformation; sequence CEECAEEAEKQKQEAKRKRET. Disordered stretches follow at residues 369-390, 411-440, 460-701, 975-1050, 1059-1078, 1087-1138, 1152-1186, and 1249-1311; these read PDAK…ILPR, NHQT…FLKS, HPRQ…EDLN, TNPQ…PSKK, EAGV…GDSL, EQEL…NPAN, NDGL…GIMK, and LSRS…DLPR. Over residues 411–431 the composition is skewed to polar residues; sequence NHQTSFSDDTESARSAGSQLQ. Residues 460–472 are compositionally biased toward basic and acidic residues; sequence HPRQKTGKEDTAL. Residues 487–502 are compositionally biased toward polar residues; sequence PSRTTDAGNSGGSDSQ. A compositionally biased stretch (basic and acidic residues) spans 512-528; the sequence is HSQEGKSLKQVKDRNRE. A compositionally biased stretch (polar residues) spans 529–552; it reads ANASASSIDQKLKSRGNSSVSHAN. The span at 553-566 shows a compositional bias: basic and acidic residues; that stretch reads NNRDLKGLQSDGKR. A compositionally biased stretch (polar residues) spans 569–607; it reads LTKQVSNLSRNRLENSVVSGGDISTNEKCSASEQSSSQA. The segment covering 640 to 653 has biased composition (basic and acidic residues); sequence VPREVGKKSKEAFS. Polar residues-rich tracts occupy residues 668–694, 977–988, and 1014–1025; these read PSSQ…STTK, PQKNTSLPTSNV, and LRESSSNGIETR. Positions 1026 to 1050 are enriched in basic and acidic residues; it reads NGTDARSHENPNNRESSIERSPSKK. The segment covering 1087–1096 has biased composition (basic and acidic residues); the sequence is EQELGGRKDL. Residues 1250–1263 are compositionally biased toward polar residues; it reads SRSSNSGEQSNNSM. The stretch at 1256-1276 forms a coiled coil; sequence GEQSNNSMNKEKQKADEEEED. Positions 1280-1289 are enriched in low complexity; that stretch reads VAASLSLSLS.

In terms of assembly, part of the BAH-PHD bivalent histone reader complex that contains AIPP2, PAIPP2 and AIPP3/BDT1; the BAH-PHD module associates with CPL2 to form the BAH-PHD-CPL2 complex (BPC) for transcriptional repression. Binds directly to AIPP3/BDT1 and CPL2, but not to AIPP2. As to expression, expressed ubiquitously.

Functionally, together with AIPP2 and AIPP3/BDT1, cooperates to form a BAH-PHD bivalent histone reader complex able to read histone H3 lysine 27 trimethylation (H3K27me3) and low-methylated H3K4 histone marks in order to regulate transcription, especially to prevent early flowering; promotes AIPP3/BDT1 binding to H3K27me3. CPL2 is subsequently recruited to form a BAH-PHD-CPL2 complex (BPC) in order to silence several H3K27me3 and low-methylated H3K4 enriched loci, including AGO5, via the phosphorylation state-dependent inhibition of Pol II release from the transcriptional start site (e.g. Ser5P-Pol II dephosphorylation). The BPC complex represses flowering by inhibiting the expression of several genes, including AGL6, FT, FUL and SOC1. The protein is Protein PARALOG OF AIPP2 of Arabidopsis thaliana (Mouse-ear cress).